The sequence spans 955 residues: Isoleucine--tRNA ligase (955 aa).

A 'HIGH' region motif is present at residues 60–70 (PYANGDLHIGH). Glu-563 is a binding site for L-isoleucyl-5'-AMP. Residues 604–608 (KMSKS) carry the 'KMSKS' region motif. Residue Lys-607 participates in ATP binding. Zn(2+) contacts are provided by Cys-926, Cys-929, Cys-946, and Cys-949.

Belongs to the class-I aminoacyl-tRNA synthetase family. IleS type 1 subfamily. As to quaternary structure, monomer. Zn(2+) serves as cofactor.

Its subcellular location is the cytoplasm. The enzyme catalyses tRNA(Ile) + L-isoleucine + ATP = L-isoleucyl-tRNA(Ile) + AMP + diphosphate. Functionally, catalyzes the attachment of isoleucine to tRNA(Ile). As IleRS can inadvertently accommodate and process structurally similar amino acids such as valine, to avoid such errors it has two additional distinct tRNA(Ile)-dependent editing activities. One activity is designated as 'pretransfer' editing and involves the hydrolysis of activated Val-AMP. The other activity is designated 'posttransfer' editing and involves deacylation of mischarged Val-tRNA(Ile). The protein is Isoleucine--tRNA ligase of Cyanothece sp. (strain PCC 7425 / ATCC 29141).